The following is a 294-amino-acid chain: Undecaprenyl-diphosphatase (294 aa).

6 helical membrane passes run 39–59, 93–113, 123–143, 198–218, 232–252, and 268–288; these read PGAA…ILYF, ATLG…GFTL, NLWI…VVDA, SFLM…VKAV, PTLV…IGFL, and IGLA…AIDP.

It belongs to the UppP family.

The protein localises to the cell membrane. It catalyses the reaction di-trans,octa-cis-undecaprenyl diphosphate + H2O = di-trans,octa-cis-undecaprenyl phosphate + phosphate + H(+). Functionally, catalyzes the dephosphorylation of undecaprenyl diphosphate (UPP). Confers resistance to bacitracin. This Bifidobacterium longum subsp. infantis (strain ATCC 15697 / DSM 20088 / JCM 1222 / NCTC 11817 / S12) protein is Undecaprenyl-diphosphatase.